A 753-amino-acid chain; its full sequence is Photosystem I P700 chlorophyll a apoprotein A1 (753 aa).

The next 8 membrane-spanning stretches (helical) occupy residues 73 to 96, 159 to 182, 198 to 222, 294 to 312, 349 to 372, 388 to 414, 436 to 458, and 534 to 552; these read IFSA…YHGA, LYCT…FHYH, LNHH…HVSL, TAHH…GHMY, WHAQ…HHMY, LSLF…IFMV, AIVS…LYIH, and FLVH…LILL. Residues cysteine 576 and cysteine 585 each contribute to the [4Fe-4S] cluster site. 2 consecutive transmembrane segments (helical) span residues 592–613 and 667–689; these read HVFL…HFSW and LSAY…MFLF. Residue histidine 678 participates in chlorophyll a' binding. Positions 686 and 694 each coordinate chlorophyll a. Tryptophan 695 contacts phylloquinone. The chain crosses the membrane as a helical span at residues 727 to 747; the sequence is AVGVAHYLLGGIVTTWAFFLA.

The protein belongs to the PsaA/PsaB family. As to quaternary structure, the PsaA/B heterodimer binds the P700 chlorophyll special pair and subsequent electron acceptors. PSI consists of a core antenna complex that captures photons, and an electron transfer chain that converts photonic excitation into a charge separation. The eukaryotic PSI reaction center is composed of at least 11 subunits. P700 is a chlorophyll a/chlorophyll a' dimer, A0 is one or more chlorophyll a, A1 is one or both phylloquinones and FX is a shared 4Fe-4S iron-sulfur center. is required as a cofactor.

It localises to the plastid. The protein localises to the chloroplast thylakoid membrane. The enzyme catalyses reduced [plastocyanin] + hnu + oxidized [2Fe-2S]-[ferredoxin] = oxidized [plastocyanin] + reduced [2Fe-2S]-[ferredoxin]. In terms of biological role, psaA and PsaB bind P700, the primary electron donor of photosystem I (PSI), as well as the electron acceptors A0, A1 and FX. PSI is a plastocyanin-ferredoxin oxidoreductase, converting photonic excitation into a charge separation, which transfers an electron from the donor P700 chlorophyll pair to the spectroscopically characterized acceptors A0, A1, FX, FA and FB in turn. Oxidized P700 is reduced on the lumenal side of the thylakoid membrane by plastocyanin. The chain is Photosystem I P700 chlorophyll a apoprotein A1 from Pinus thunbergii (Japanese black pine).